Reading from the N-terminus, the 290-residue chain is 4-hydroxy-tetrahydrodipicolinate synthase (290 aa).

Residue threonine 44 participates in pyruvate binding. Catalysis depends on tyrosine 132, which acts as the Proton donor/acceptor. Catalysis depends on lysine 160, which acts as the Schiff-base intermediate with substrate. Position 202 (isoleucine 202) interacts with pyruvate.

The protein belongs to the DapA family. Homotetramer; dimer of dimers.

It is found in the cytoplasm. It carries out the reaction L-aspartate 4-semialdehyde + pyruvate = (2S,4S)-4-hydroxy-2,3,4,5-tetrahydrodipicolinate + H2O + H(+). Its pathway is amino-acid biosynthesis; L-lysine biosynthesis via DAP pathway; (S)-tetrahydrodipicolinate from L-aspartate: step 3/4. Its function is as follows. Catalyzes the condensation of (S)-aspartate-beta-semialdehyde [(S)-ASA] and pyruvate to 4-hydroxy-tetrahydrodipicolinate (HTPA). The polypeptide is 4-hydroxy-tetrahydrodipicolinate synthase (Geotalea daltonii (strain DSM 22248 / JCM 15807 / FRC-32) (Geobacter daltonii)).